The sequence spans 178 residues: MAENVTIARPYADAAFELARGAGALGPWSEALDRLAAAAADASMKACISNPKLSADQLYQLFIDVAGQGFTPELQNFVRVLVDNERLQMLPEIRDLFVELKNEHEGVQEAEIASAFPLDDATLANLKADLETRFKTRLNTKVSLDPELIGGVRIAIGDEVIDASVRGKLANMAAALKN.

Belongs to the ATPase delta chain family. As to quaternary structure, F-type ATPases have 2 components, F(1) - the catalytic core - and F(0) - the membrane proton channel. F(1) has five subunits: alpha(3), beta(3), gamma(1), delta(1), epsilon(1). F(0) has three main subunits: a(1), b(2) and c(10-14). The alpha and beta chains form an alternating ring which encloses part of the gamma chain. F(1) is attached to F(0) by a central stalk formed by the gamma and epsilon chains, while a peripheral stalk is formed by the delta and b chains.

The protein localises to the cell inner membrane. F(1)F(0) ATP synthase produces ATP from ADP in the presence of a proton or sodium gradient. F-type ATPases consist of two structural domains, F(1) containing the extramembraneous catalytic core and F(0) containing the membrane proton channel, linked together by a central stalk and a peripheral stalk. During catalysis, ATP synthesis in the catalytic domain of F(1) is coupled via a rotary mechanism of the central stalk subunits to proton translocation. Functionally, this protein is part of the stalk that links CF(0) to CF(1). It either transmits conformational changes from CF(0) to CF(1) or is implicated in proton conduction. In Aromatoleum aromaticum (strain DSM 19018 / LMG 30748 / EbN1) (Azoarcus sp. (strain EbN1)), this protein is ATP synthase subunit delta.